Reading from the N-terminus, the 484-residue chain is Probable endopeptidase p60 (484 aa).

Positions 1–27 (MNMKKATIAATAGIAVTAFAAPTIASA) are cleaved as a signal peptide. Residues 28–71 (STVVVEAGDTLWGIAQSKGTTVDAIKKANNLTTDKIVPGQKLQV) form the LysM 1 domain. Positions 80–144 (KTEKSVSATW…VNGKYLTDKA (65 aa)) constitute an SH3b domain. Positions 150–192 (APTQEVKKETTTQQAAPAAETKTEVKQTTQATTPAPKVAETKE) are disordered. A compositionally biased stretch (low complexity) spans 160-169 (TTQQAAPAAE). Residues 201–244 (TTHAVKSGDTIWALSVKYGVSVQDIMSWNNLSSSSIYVGQKLAI) enclose the LysM 2 domain. A disordered region spans residues 254 to 367 (KAEVKTEAPA…QGSSNNNSNS (114 aa)). Composition is skewed to low complexity over residues 273–282 (KENTNTNTAT) and 289–367 (ATQQ…NSNS). A 19 X 2 AA tandem repeats of T-N region spans residues 311-355 (TNTNANKTNTNTNTNTNTNNTNTNTPSKNTNTNSNTNTNTNSNTN). Residues 366–484 (NSSASAIIAE…GKYLVGFGRV (119 aa)) form the NlpC/P60 domain. Cys-396 acts as the Nucleophile in catalysis. Residue His-446 is the Proton acceptor of the active site. Asn-458 is an active-site residue.

This sequence belongs to the peptidase C40 family.

It localises to the cell surface. The protein resides in the secreted. In terms of biological role, this major extracellular protein may be involved in the invasion of non-professional phagocytic cells by Listeria. The chain is Probable endopeptidase p60 (iap) from Listeria monocytogenes serovar 1/2a (strain ATCC BAA-679 / EGD-e).